The chain runs to 214 residues: Endoplasmic reticulum vesicle protein 25 (214 aa).

A signal peptide spans 1–20 (MRSISTLLFIISTFISLVSA). The Lumenal segment spans residues 21-183 (LQLAIPATTN…TNESTNSRVK (163 aa)). The region spanning 33 to 124 (PFCIRDFVQE…VREIELDVES (92 aa)) is the GOLD domain. The chain crosses the membrane as a helical span at residues 184 to 204 (WFSILVITSLVGLGAWQVQYL). At 205-214 (RHYFKVKHII) the chain is on the cytoplasmic side.

This sequence belongs to the EMP24/GP25L family.

It is found in the endoplasmic reticulum membrane. It localises to the golgi apparatus membrane. Constituent of COPII-coated endoplasmic reticulum-derived transport vesicles. Required for efficient transport of a subset of secretory proteins to the Golgi. Facilitates retrograde transport from the Golgi to the endoplasmic reticulum. This chain is Endoplasmic reticulum vesicle protein 25 (ERV25), found in Debaryomyces hansenii (strain ATCC 36239 / CBS 767 / BCRC 21394 / JCM 1990 / NBRC 0083 / IGC 2968) (Yeast).